Consider the following 355-residue polypeptide: MSGQPKRLMVMAGGTGGHVFPGLAVAHHLMDQGWQVRWLGTADRMEADLVPKHGIEIDFIRISGLRGKGVKALLAAPLRIFNAWRQARAIMKQFKPDVVLGMGGYVSGPGGLAAWSLGIPVVLHEQNGIAGLTNKWLAKIATTVMQAFPGAFPKADVVGNPVRTDVLALPLPQERLAGREGPIRVLVVGGSQGARVLNQTLPQVAAKLGDTVTIWHQSGKGAQQTVEQAYAGAGQPQHKVTEFIDDMAAAYAWADVVVCRSGALTVSEIAAAGLPALFVPFQHKDRQQYWNALPLEKAGAAKIFEQPQFTVDAVASTLSGWSRETLLTMAERARAASIPDATERVANEVSRAARA.

UDP-N-acetyl-alpha-D-glucosamine is bound by residues threonine 15–glycine 17, asparagine 127, arginine 163, serine 191, isoleucine 244, alanine 263–glutamate 268, and glutamine 288.

This sequence belongs to the glycosyltransferase 28 family. MurG subfamily.

It is found in the cell inner membrane. It catalyses the reaction di-trans,octa-cis-undecaprenyl diphospho-N-acetyl-alpha-D-muramoyl-L-alanyl-D-glutamyl-meso-2,6-diaminopimeloyl-D-alanyl-D-alanine + UDP-N-acetyl-alpha-D-glucosamine = di-trans,octa-cis-undecaprenyl diphospho-[N-acetyl-alpha-D-glucosaminyl-(1-&gt;4)]-N-acetyl-alpha-D-muramoyl-L-alanyl-D-glutamyl-meso-2,6-diaminopimeloyl-D-alanyl-D-alanine + UDP + H(+). Its pathway is cell wall biogenesis; peptidoglycan biosynthesis. In terms of biological role, cell wall formation. Catalyzes the transfer of a GlcNAc subunit on undecaprenyl-pyrophosphoryl-MurNAc-pentapeptide (lipid intermediate I) to form undecaprenyl-pyrophosphoryl-MurNAc-(pentapeptide)GlcNAc (lipid intermediate II). In Citrobacter koseri (strain ATCC BAA-895 / CDC 4225-83 / SGSC4696), this protein is UDP-N-acetylglucosamine--N-acetylmuramyl-(pentapeptide) pyrophosphoryl-undecaprenol N-acetylglucosamine transferase.